The following is a 147-amino-acid chain: Large ribosomal subunit protein uL13 (147 aa).

It belongs to the universal ribosomal protein uL13 family. In terms of assembly, part of the 50S ribosomal subunit.

This protein is one of the early assembly proteins of the 50S ribosomal subunit, although it is not seen to bind rRNA by itself. It is important during the early stages of 50S assembly. The polypeptide is Large ribosomal subunit protein uL13 (Rhodococcus opacus (strain B4)).